A 777-amino-acid polypeptide reads, in one-letter code: MAVEPGTSEVRRQHRFDQGSLERYLCRCLPGFPQQPAGALSVRQYSSGQSNPTFYLQKGGQAYVLRKKPHGPLLPNAHKVDREYHVQKALFSAGFPVPEPLLYCSDVSVIGTEFYVMQHVQGRIFRDASLPEVGPAERSALYLAIETLAQLHSFDLRSLGLQGYGRGPGYCRRQVSTWKRQYDAAAHTDIPAMNELAKWLANNLPPDDDEEALIHGDFRIDNIIFHPTEARVLAVLDWELSTTGHPLADLAYATQFYFWPTSLNVLGQGSVFNFKGTIENPSFEELISIYCRCRGISTTIPNLNFFLALSYFKMAGISQGVYARYLIGNASAESSHEFAKMVKPLAEKGLELSKRLSFSSIQHNTSGELFYQSRKGQEVLLKVKQFMKQHVYPAEKEIAEYYAKHGNTEERWKKPPVLERLKEMAKAEGLWNLFLPAVSSLSQLDYALIAEETGKRFFAPEVFNCQAPDTGNMEVLHLYGTEEQKKEWLEPLLEGKISSCFCMTEPDVASSDATNMQCSIERDGNSYVINGKKWWSSGAGNPNCKVAIVMGKTKNSSASRYKQHSMIIVPMDTPGVRLIRPLSVFGYIDEIHGGHFEVHFNDVRVPVSNMILGEGRGFEIAQGRLGPGRIHHCMRSIGAAETALEILCQRAAQRETFGKKLYHHEVVAHWIAECRLSIEQARLLTLKTASKIDTLGNRKARKEVAMTKVVVPRAVLKVIDCAIQVCGGAGVSQDFPLASMFAYIRTLRVADGPDEVHLSTIARWELLDQSKKLTAKI.

FAD-binding positions include 501 to 511, 509 to 511, 535 to 537, and Ser-537; these read FCMTEPDVASS, ASS, and WSS. A substrate-binding site is contributed by Ser-511. 626–629 lines the substrate pocket; it reads GPGR. Residues Arg-654, Gln-724, and 724 to 728 contribute to the FAD site; that span reads QVCGG. A substrate-binding site is contributed by Gly-752. Residues 753–755 and Glu-755 contribute to the FAD site; that span reads PDE.

It belongs to the acyl-CoA dehydrogenase family. Homodimer. FAD serves as cofactor.

It localises to the peroxisome. It is found in the mitochondrion membrane. It carries out the reaction a 2,3-saturated acyl-CoA + oxidized [electron-transfer flavoprotein] + H(+) = a (2E)-enoyl-CoA + reduced [electron-transfer flavoprotein]. The catalysed reaction is docosanoyl-CoA + oxidized [electron-transfer flavoprotein] + H(+) = (2E)-docosenoyl-CoA + reduced [electron-transfer flavoprotein]. The enzyme catalyses tetracosanoyl-CoA + oxidized [electron-transfer flavoprotein] + H(+) = (2E)-tetracosenoyl-CoA + reduced [electron-transfer flavoprotein]. It catalyses the reaction eicosanoyl-CoA + oxidized [electron-transfer flavoprotein] + H(+) = (2E)-eicosenoyl-CoA + reduced [electron-transfer flavoprotein]. It carries out the reaction hexacosanoyl-CoA + oxidized [electron-transfer flavoprotein] + H(+) = (2E)-hexacosenoyl-CoA + reduced [electron-transfer flavoprotein]. The catalysed reaction is tricosanoyl-CoA + oxidized [electron-transfer flavoprotein] + H(+) = (2E)-tricosenoyl-CoA + reduced [electron-transfer flavoprotein]. It functions in the pathway lipid metabolism; fatty acid beta-oxidation. Its function is as follows. Acyl-CoA dehydrogenase, that exhibits maximal activity towards saturated C22-CoA. Probably participates in beta-oxydation and energy production but could also play a role in the metabolism of specific fatty acids to control fatty acids composition of cellular lipids in brain. This is Acyl-CoA dehydrogenase family member 11 (ACAD11) from Gallus gallus (Chicken).